We begin with the raw amino-acid sequence, 227 residues long: MIIKTYFSGVSTIGVLSLATEDYGLFPLSVEKNTLEKMKEVLNIPVTQLNISNSSLIGSLCVGNSNGLLVPNIVTSKEIALIKDFLKENSLDVNLEKLKAKNTAFGNLILTNNKGCIISEELQNFRKVIEDVLGVESGVGNYASLPTVGSNGVATDKGCLVHPLTDELELEWITDVLKVDYVGRGTANRGVTSVGSCILANTKGAVIGGDTSGPELLKIEEALDLID.

Belongs to the eIF-6 family.

Its function is as follows. Binds to the 50S ribosomal subunit and prevents its association with the 30S ribosomal subunit to form the 70S initiation complex. The protein is Translation initiation factor 6 of Methanococcus vannielii (strain ATCC 35089 / DSM 1224 / JCM 13029 / OCM 148 / SB).